A 343-amino-acid chain; its full sequence is NADH dehydrogenase [ubiquinone] 1 alpha subcomplex subunit 10, mitochondrial (343 aa).

Residues 1–23 (MALRLLRLVPPRVGGIHTSVQFK) constitute a mitochondrion transit peptide. Residue Lys110 is modified to N6-acetyllysine; alternate. The residue at position 110 (Lys110) is an N6-succinyllysine; alternate. Position 238 is a phosphoserine; by PINK1 (Ser238).

Belongs to the complex I NDUFA10 subunit family. Complex I is composed of 45 different subunits. This a component of the hydrophobic protein fraction. It depends on FAD as a cofactor. Post-translationally, phosphorylation at Ser-238 by PINK1 is required for the binding and/or reduction of the complex I substrate ubiquinone.

The protein localises to the mitochondrion matrix. Its function is as follows. Accessory subunit of the mitochondrial membrane respiratory chain NADH dehydrogenase (Complex I), that is believed not to be involved in catalysis. Complex I functions in the transfer of electrons from NADH to the respiratory chain. The immediate electron acceptor for the enzyme is believed to be ubiquinone. This Bos taurus (Bovine) protein is NADH dehydrogenase [ubiquinone] 1 alpha subcomplex subunit 10, mitochondrial (NDUFA10).